The following is a 226-amino-acid chain: ATP synthase subunit a (226 aa).

Transmembrane regions (helical) follow at residues 18 to 38 (FITG…SLGA), 79 to 99 (LAGT…IPGF), 105 to 125 (SWSF…FEGI), 134 to 154 (FAHF…IEII), 179 to 199 (LIML…VLFF), and 201 to 221 (GILQ…GAVL).

It belongs to the ATPase A chain family. As to quaternary structure, F-type ATPases have 2 components, CF(1) - the catalytic core - and CF(0) - the membrane proton channel. CF(1) has five subunits: alpha(3), beta(3), gamma(1), delta(1), epsilon(1). CF(0) has three main subunits: a(1), b(2) and c(9-12). The alpha and beta chains form an alternating ring which encloses part of the gamma chain. CF(1) is attached to CF(0) by a central stalk formed by the gamma and epsilon chains, while a peripheral stalk is formed by the delta and b chains.

The protein resides in the cell inner membrane. Key component of the proton channel; it plays a direct role in the translocation of protons across the membrane. In Helicobacter pylori (strain HPAG1), this protein is ATP synthase subunit a.